We begin with the raw amino-acid sequence, 268 residues long: Mitochondrial distribution and morphology protein 12 (268 aa).

One can recognise an SMP-LTD domain in the interval 1-256 (MSFEINWQDL…WPSWINLDFN (256 aa)). Residues 75–94 (LPKDKIPEESDSGCQSADGE) are disordered.

This sequence belongs to the MDM12 family. As to quaternary structure, component of the ER-mitochondria encounter structure (ERMES) or MDM complex, composed of MMM1, MDM10, MDM12 and MDM34. An MMM1 homodimer associates with one molecule of MDM12 on each side in a pairwise head-to-tail manner, and the SMP-LTD domains of MMM1 and MDM12 generate a continuous hydrophobic tunnel for phospholipid trafficking.

It is found in the mitochondrion outer membrane. Its subcellular location is the endoplasmic reticulum membrane. Functionally, component of the ERMES/MDM complex, which serves as a molecular tether to connect the endoplasmic reticulum (ER) and mitochondria. Components of this complex are involved in the control of mitochondrial shape and protein biogenesis, and function in nonvesicular lipid trafficking between the ER and mitochondria. MDM12 is required for the interaction of the ER-resident membrane protein MMM1 and the outer mitochondrial membrane-resident beta-barrel protein MDM10. The MDM12-MMM1 subcomplex functions in the major beta-barrel assembly pathway that is responsible for biogenesis of all mitochondrial outer membrane beta-barrel proteins, and acts in a late step after the SAM complex. The MDM10-MDM12-MMM1 subcomplex further acts in the TOM40-specific pathway after the action of the MDM12-MMM1 complex. Essential for establishing and maintaining the structure of mitochondria and maintenance of mtDNA nucleoids. The sequence is that of Mitochondrial distribution and morphology protein 12 from Lachancea thermotolerans (strain ATCC 56472 / CBS 6340 / NRRL Y-8284) (Yeast).